The primary structure comprises 264 residues: S-adenosylmethionine decarboxylase proenzyme (264 aa).

The Schiff-base intermediate with substrate; via pyruvic acid role is filled by Ser-112. Ser-112 bears the Pyruvic acid (Ser); by autocatalysis mark. Residue His-117 is the Proton acceptor; for processing activity of the active site. Catalysis depends on Cys-140, which acts as the Proton donor; for catalytic activity.

Belongs to the prokaryotic AdoMetDC family. Type 2 subfamily. In terms of assembly, heterooctamer of four alpha and four beta chains arranged as a tetramer of alpha/beta heterodimers. Pyruvate serves as cofactor. Post-translationally, is synthesized initially as an inactive proenzyme. Formation of the active enzyme involves a self-maturation process in which the active site pyruvoyl group is generated from an internal serine residue via an autocatalytic post-translational modification. Two non-identical subunits are generated from the proenzyme in this reaction, and the pyruvate is formed at the N-terminus of the alpha chain, which is derived from the carboxyl end of the proenzyme. The post-translation cleavage follows an unusual pathway, termed non-hydrolytic serinolysis, in which the side chain hydroxyl group of the serine supplies its oxygen atom to form the C-terminus of the beta chain, while the remainder of the serine residue undergoes an oxidative deamination to produce ammonia and the pyruvoyl group blocking the N-terminus of the alpha chain.

The enzyme catalyses S-adenosyl-L-methionine + H(+) = S-adenosyl 3-(methylsulfanyl)propylamine + CO2. The protein operates within amine and polyamine biosynthesis; S-adenosylmethioninamine biosynthesis; S-adenosylmethioninamine from S-adenosyl-L-methionine: step 1/1. In terms of biological role, catalyzes the decarboxylation of S-adenosylmethionine to S-adenosylmethioninamine (dcAdoMet), the propylamine donor required for the synthesis of the polyamines spermine and spermidine from the diamine putrescine. The chain is S-adenosylmethionine decarboxylase proenzyme from Klebsiella pneumoniae subsp. pneumoniae (strain ATCC 700721 / MGH 78578).